Reading from the N-terminus, the 131-residue chain is MSEIPGDLKFLKSHEWARVEGNGRVTVGISDHAQGLLGDLVYVELPAVGDTVQAGNGAAVVESVKAASDVYSPVTGTVVEVNASLSDKPETINEDAYGEGWIFVVEIDDKEQLNELLAPDDYAELLEDDAH.

The Lipoyl-binding domain occupies 24–106; the sequence is RVTVGISDHA…YGEGWIFVVE (83 aa). Residue Lys65 is modified to N6-lipoyllysine.

Belongs to the GcvH family. The glycine cleavage system is composed of four proteins: P, T, L and H. It depends on (R)-lipoate as a cofactor.

The glycine cleavage system catalyzes the degradation of glycine. The H protein shuttles the methylamine group of glycine from the P protein to the T protein. The polypeptide is Glycine cleavage system H protein (Xanthomonas campestris pv. campestris (strain 8004)).